Here is a 514-residue protein sequence, read N- to C-terminus: Serine/threonine protein phosphatase PstP (514 aa).

The Cytoplasmic segment spans residues 1–302 (MARVTLVLRY…RPRWSGRRLA (302 aa)). Residues 9-238 (RYAARSDRGL…DNVTVVVADV (230 aa)) enclose the PPM-type phosphatase domain. The Mn(2+) site is built by Asp-38, Gly-39, Asp-118, Ser-160, Asp-191, and Asp-229. A helical membrane pass occupies residues 303–323 (FVVALVTVLMTAGLLIGRAII). Topologically, residues 324–514 (RSNYYVADYA…QPGIDCRAAA (191 aa)) are extracellular. Residues 420–514 (LLPPCPAPRA…QPGIDCRAAA (95 aa)) are disordered. Low complexity predominate over residues 440-480 (TTSETTEPNVTSSPASPSPTTSASAPTGTTPAIPTSASPAA).

The cofactor is Mn(2+).

The protein localises to the cell membrane. It catalyses the reaction O-phospho-L-seryl-[protein] + H2O = L-seryl-[protein] + phosphate. The enzyme catalyses O-phospho-L-threonyl-[protein] + H2O = L-threonyl-[protein] + phosphate. In terms of biological role, plays an important role in regulating cell division and growth by reversible phosphorylation signaling. May play important roles in regulating cellular metabolism and signaling pathways, which could mediate the growth and development of the cell. Plays a role in establishing and maintaining infection. This Mycobacterium tuberculosis (strain CDC 1551 / Oshkosh) protein is Serine/threonine protein phosphatase PstP (pstP).